The chain runs to 196 residues: ATP-dependent Clp protease proteolytic subunit (196 aa).

Residue S101 is the Nucleophile of the active site. H126 is a catalytic residue.

It belongs to the peptidase S14 family. As to quaternary structure, component of the chloroplastic Clp protease core complex.

The protein resides in the plastid. The protein localises to the chloroplast stroma. It catalyses the reaction Hydrolysis of proteins to small peptides in the presence of ATP and magnesium. alpha-casein is the usual test substrate. In the absence of ATP, only oligopeptides shorter than five residues are hydrolyzed (such as succinyl-Leu-Tyr-|-NHMec, and Leu-Tyr-Leu-|-Tyr-Trp, in which cleavage of the -Tyr-|-Leu- and -Tyr-|-Trp bonds also occurs).. Functionally, cleaves peptides in various proteins in a process that requires ATP hydrolysis. Has a chymotrypsin-like activity. Plays a major role in the degradation of misfolded proteins. The sequence is that of ATP-dependent Clp protease proteolytic subunit from Gossypium barbadense (Sea Island cotton).